Reading from the N-terminus, the 444-residue chain is NAD(+)--protein-arginine ADP-ribosyltransferase Tre1 (444 aa).

The interval 72 to 140 (PRHVTGVLAD…NDLLACSAEI (69 aa)) is PAAR domain. One can recognise a TR mART core domain in the interval 266–444 (MTLAEAVGQE…TTHLLYREIP (179 aa)). An ART domain region spans residues 274–444 (QEQAKVWTQT…TTHLLYREIP (171 aa)). Active-site residues include Arg-356, Ser-381, and Glu-415.

The protein belongs to the Arg-specific ADP-ribosyltransferase family. In terms of assembly, forms a stable complex with cognate immunity protein Tri1-Sp.

It localises to the secreted. Its subcellular location is the host cytoplasm. It catalyses the reaction L-arginyl-[protein] + NAD(+) = N(omega)-(ADP-D-ribosyl)-L-arginyl-[protein] + nicotinamide + H(+). Its function is as follows. Toxic component of a contact-dependent interbacterial competition system (also called effector-immunity systems). Acts by ADP-ribosylating a number of target proteins in target cells; E.coli target proteins include FtsZ, EFTu, RNase E, Fis, RL9, SucB, and LolD. FtsZ is thought to be the physiologically relevant target as it is ADP-ribosylated on a critical residue. ADP-ribosylation of FtsZ prevents formation of the FtsZ mid-cell ring and inhibits cell division. Overexpression of the whole Tre1 protein or the ART domain in E.coli is toxic; cells elongate dramatically and some undergo lysis. Toxic activity is neutralized by coexpression of the cognate immunity protein Tri1-Sp; Tri1-Sp neutralizes this protein both by binding to and occluding the active site (via Tri1's N-terminal extension) and by hydrolysis of the ADP-ribosyl moiety from the target protein. Tre1 can also be neutralized by non-cognate immunity protein Tri1-Pp from P.putida strain GB-1, with which it does not form a stable complex; DraG of R.palustris does not neutralize the toxic effects of this protein. In interbacterial competition studies Tri1 from P.putida strain B6-2 also neutralizes this protein. This is NAD(+)--protein-arginine ADP-ribosyltransferase Tre1 from Serratia proteamaculans (strain 568).